The chain runs to 410 residues: Heat stress transcription factor A-9 (410 aa).

Positions 1–44 are disordered; that stretch reads MGSKKRSPQHPAAAAPPPAVGGGGGGEVSGDGGASTANGPVVPK. Residues 20–33 are compositionally biased toward gly residues; it reads VGGGGGGEVSGDGG. A coiled-coil region spans residues 171-246; the sequence is GLEKEVETLK…QLVQQQQQQR (76 aa). The segment at 179 to 229 is hydrophobic repeat HR-A/B; it reads LKRDKALLMQQLVDLRHYQQTSNLEVQNLIERLQVMEQNQQQMMALLAIVV. The short motif at 256–260 is the Nuclear localization signal element; that stretch reads SKKRR. Residues 279 to 290 carry the Nuclear export signal motif; the sequence is AHIVEYLPPVPE.

This sequence belongs to the HSF family. Class A subfamily. As to quaternary structure, homotrimer. Post-translationally, exhibits temperature-dependent phosphorylation.

It is found in the cytoplasm. The protein resides in the nucleus. Transcriptional regulator that specifically binds DNA of heat shock promoter elements (HSE). The protein is Heat stress transcription factor A-9 (HSFA9) of Oryza sativa subsp. japonica (Rice).